The following is a 1745-amino-acid chain: Tight junction protein 1 (1745 aa).

Residues 23-110 (TVTLHRAPGF…NAKITIRRKK (88 aa)) enclose the PDZ 1 domain. Basic residues predominate over residues 102–112 (AKITIRRKKKV). Residues 102 to 189 (AKITIRRKKK…QPAKPTKVTL (88 aa)) are disordered. The span at 123 to 136 (PVSDNEDDSYDEEV) shows a compositional bias: acidic residues. A Phosphoserine modification is found at serine 125. Tyrosine 132 is modified (phosphotyrosine). The span at 149 to 175 (RRSEKSWARDRSASRERSLSPRSDRRS) shows a compositional bias: basic and acidic residues. Serine 175, serine 178, and serine 179 each carry phosphoserine. Residue threonine 185 is modified to Phosphothreonine. Residues 186 to 264 (KVTLVKSRKN…KLKMVVQRDE (79 aa)) form the PDZ 2 domain. 2 positions are modified to phosphoserine: serine 212 and serine 241. Threonine 267 carries the post-translational modification Phosphothreonine. Serine 275, serine 277, serine 280, serine 284, serine 290, serine 294, serine 297, serine 300, serine 323, serine 329, serine 334, serine 337, and serine 353 each carry phosphoserine. The interval 296-364 (ASDHSGRSHD…PVKHVDDHPP (69 aa)) is disordered. A compositionally biased stretch (basic and acidic residues) spans 299–308 (HSGRSHDRPP). A compositionally biased stretch (polar residues) spans 325 to 338 (HSTQSPQQPSNGSL). Residue threonine 354 is modified to Phosphothreonine. Positions 421 to 502 (SMKLVKFRKG…GEEVTILAQK (82 aa)) constitute a PDZ 3 domain. Residues 516–584 (GDSFYIRTHF…PNKNRAEQLA (69 aa)) form the SH3 domain. One can recognise a Guanylate kinase-like domain in the interval 610-791 (SKRNLRKSRE…WYGALKEAIQ (182 aa)). Phosphoserine is present on residues serine 617 and serine 622. The segment at 633–876 (YERVVLREAG…GTPPESAITR (244 aa)) is occludin (OCLN)-binding region. Position 809 is a phosphothreonine (threonine 809). Serine 810 and serine 821 each carry phosphoserine. Phosphotyrosine is present on tyrosine 822. Phosphoserine is present on residues serine 824, serine 828, and serine 837. Disordered regions lie at residues 825–944 (APGS…SASA) and 956–1042 (LEEP…YEPQ). Phosphothreonine is present on residues threonine 846, threonine 848, threonine 854, threonine 861, and threonine 868. A compositionally biased stretch (basic and acidic residues) spans 879–892 (EPVREDSSGMHHEN). Over residues 893-906 (QTYPPYSPQAQPQA) the composition is skewed to low complexity. Phosphoserine is present on serine 912. Residues 998 to 1014 (DPAKVYRKEPYSEEMMR) are compositionally biased toward basic and acidic residues. A Phosphoserine modification is found at serine 1071. Positions 1090 to 1586 (QWSYYDDKQP…STQPPEFDSG (497 aa)) are disordered. Over residues 1106-1124 (ENQHPRDLDSRQHPEEASE) the composition is skewed to basic and acidic residues. Residue serine 1138 is modified to Phosphoserine. Residues tyrosine 1139 and tyrosine 1164 each carry the phosphotyrosine modification. The tract at residues 1150–1370 (RTSTLRHEEQ…FDRRSFESKP (221 aa)) is actin-binding region (ABR). Basic and acidic residues-rich tracts occupy residues 1268 to 1285 (KMFENKRSASLENKKDVN) and 1335 to 1346 (PPEDIVRSNHYD). The residue at position 1353 (tyrosine 1353) is a Phosphotyrosine. At serine 1365 the chain carries Phosphoserine. The segment covering 1388-1399 (SQSQPNFSSYSS) has biased composition (low complexity). Residues 1401-1418 (GKPETDAVDRSFSEKRYD) are compositionally biased toward basic and acidic residues. Serine 1411 carries the post-translational modification Phosphoserine. Residues 1431-1445 (SQYSQPAPPLSSSSL) show a composition bias toward low complexity. Polar residues-rich tracts occupy residues 1455-1468 (EGNSVSLDFQNSYM) and 1510-1519 (AEQTQKTITP). Residues 1535 to 1544 (PFERKFESPK) are compositionally biased toward basic and acidic residues. Phosphoserine is present on serine 1542. Positions 1561 to 1580 (SSKTPTSPKTLMKAHSSTQP) are enriched in polar residues. Position 1614 is a phosphoserine (serine 1614). One can recognise a ZU5 domain in the interval 1631–1745 (ATARGIFNSN…NCVSVLIDHF (115 aa)).

This sequence belongs to the MAGUK family. As to quaternary structure, homodimer. Forms heterodimers TJP3. Forms a heterodimer (via PDZ2 domain) with TJP2/ZO2 (via PDZ2 domain). Interacts with OCLN, CALM, claudins, CGN/cingulin, CXADR, GJD3 and UBN1. Interacts (via ZU5 domain) with CDC42BPB. Interacts (via PDZ domain) with GJA1. Interacts (via PDZ domains) with ANKRD2. Interacts with POPDC1 (via the C-terminus cytoplasmic tail). Interacts with GJA12 and KIRREL1. Interacts with HSPA4. Interacts (via ZU5 domain) with MYZAP. Interacts with DLL1. Interacts with USP53 (via the C-terminal region). Interacts with DNMBP (via C-terminal domain); required for the apical cell-cell junction localization of DNMBP. Interacts with SPEF1. Interacts (via N-terminus) with CTNNA1. Interacts with CLDN18. Interacts with CLDN16 (via TRV motif); this is a prerequisite for anchoring of CLDN16 at the tight junction. Interacts with PKP1; the interaction facilitates TJP1/ZO-1 localization to the plasma membrane. Interacts with PATJ (via PDZ1-6 domains); the interaction is required for attachment and extension of TJP1/ZO1 condensates along the apical cell interface. Post-translationally, phosphorylated at tyrosine redidues in response to epidermal growth factor (EGF). This response is dependent on an intact actin microfilament system. Dephosphorylated by PTPRJ. In terms of tissue distribution, expressed between ameloblasts, at ameloblast-ameloblast junctions and in the stratum intermedium during pre-secretory and secretory stages of tooth development (at protein level).

Its subcellular location is the cell membrane. The protein resides in the cell junction. It localises to the tight junction. The protein localises to the gap junction. It is found in the cytoplasm. Its subcellular location is the myofibril. The protein resides in the sarcomere. It localises to the i band. Its function is as follows. Tjp1, TjpP2, and Tjp3 are closely related scaffolding proteins that link tight junction (TJ) transmembrane proteins such as claudins, junctional adhesion molecules, and occludin to the actin cytoskeleton. Forms a multistranded TJP1/ZO1 condensate which elongates to form a tight junction belt, the belt is anchored at the apical cell membrane via interaction with PATJ. The tight junction acts to limit movement of substances through the paracellular space and as a boundary between the compositionally distinct apical and basolateral plasma membrane domains of epithelial and endothelial cells. Necessary for lumenogenesis, and particularly efficient epithelial polarization and barrier formation. Plays a role in the regulation of cell migration by targeting Cdc42bpb to the leading edge of migrating cells. Plays an important role in podosome formation and associated function, thus regulating cell adhesion and matrix remodeling. With Tjp2 and TJjp3, participates in the junctional retention and stability of the transcription factor Dbpa, but is not involved in its shuttling to the nucleus. May play a role in mediating cell morphology changes during ameloblast differentiation via its role in tight junctions. This Mus musculus (Mouse) protein is Tight junction protein 1.